The sequence spans 160 residues: Large ribosomal subunit protein uL22c (160 aa).

It belongs to the universal ribosomal protein uL22 family. Part of the 50S ribosomal subunit.

Its subcellular location is the plastid. The protein resides in the chloroplast. In terms of biological role, this protein binds specifically to 23S rRNA. The globular domain of the protein is located near the polypeptide exit tunnel on the outside of the subunit, while an extended beta-hairpin is found that lines the wall of the exit tunnel in the center of the 70S ribosome. This chain is Large ribosomal subunit protein uL22c (rpl22), found in Aethionema cordifolium (Lebanon stonecress).